We begin with the raw amino-acid sequence, 150 residues long: Arginine repressor (150 aa).

Belongs to the ArgR family.

Its subcellular location is the cytoplasm. It participates in amino-acid biosynthesis; L-arginine biosynthesis [regulation]. Its function is as follows. Regulates arginine biosynthesis genes. This Clostridium beijerinckii (strain ATCC 51743 / NCIMB 8052) (Clostridium acetobutylicum) protein is Arginine repressor.